A 397-amino-acid polypeptide reads, in one-letter code: Elongation factor Tu (397 aa).

Residues 10–207 form the tr-type G domain; that stretch reads LPHVNVGTIG…TLDSYIPEPE (198 aa). The tract at residues 19–26 is G1; the sequence is GHVDHGKT. 19 to 26 contributes to the GTP binding site; the sequence is GHVDHGKT. Position 26 (Thr-26) interacts with Mg(2+). The interval 60–64 is G2; that stretch reads GITIN. The G3 stretch occupies residues 81 to 84; it reads DCPG. GTP contacts are provided by residues 81 to 85 and 136 to 139; these read DCPGH and NKAD. Positions 136 to 139 are G4; it reads NKAD. The tract at residues 174-176 is G5; the sequence is SAR.

The protein belongs to the TRAFAC class translation factor GTPase superfamily. Classic translation factor GTPase family. EF-Tu/EF-1A subfamily. As to quaternary structure, monomer.

Its subcellular location is the cytoplasm. The catalysed reaction is GTP + H2O = GDP + phosphate + H(+). Its function is as follows. GTP hydrolase that promotes the GTP-dependent binding of aminoacyl-tRNA to the A-site of ribosomes during protein biosynthesis. The sequence is that of Elongation factor Tu from Pseudomonas fluorescens (strain Pf0-1).